The sequence spans 248 residues: uncharacterized protein (248 aa).

This is an uncharacterized protein from Sinorhizobium fredii (strain NBRC 101917 / NGR234).